The primary structure comprises 681 residues: DNA-directed RNA polymerase subunit beta' (681 aa).

Zn(2+)-binding residues include Cys-69, Cys-71, Cys-87, and Cys-90. Mg(2+)-binding residues include Asp-489, Asp-491, and Asp-493.

Belongs to the RNA polymerase beta' chain family. RpoC1 subfamily. In terms of assembly, in plastids the minimal PEP RNA polymerase catalytic core is composed of four subunits: alpha, beta, beta', and beta''. When a (nuclear-encoded) sigma factor is associated with the core the holoenzyme is formed, which can initiate transcription. Mg(2+) is required as a cofactor. The cofactor is Zn(2+).

Its subcellular location is the plastid. It localises to the chloroplast. The catalysed reaction is RNA(n) + a ribonucleoside 5'-triphosphate = RNA(n+1) + diphosphate. DNA-dependent RNA polymerase catalyzes the transcription of DNA into RNA using the four ribonucleoside triphosphates as substrates. The chain is DNA-directed RNA polymerase subunit beta' from Cycas taitungensis (Prince sago).